Here is a 246-residue protein sequence, read N- to C-terminus: Polyhedrin (246 aa).

It belongs to the polyhedrin family.

In terms of biological role, major component of the virus occlusion bodies, which are large proteinaceous structures (polyhedra), that protect the virus from the outside environment for extended periods until they are ingested by insect larvae. The protein is Polyhedrin (PH) of Mamestra brassicae nuclear polyhedrosis virus (MbNPV).